The following is a 154-amino-acid chain: Myoglobin (154 aa).

Residues 2–148 enclose the Globin domain; the sequence is GLSDGEWQLV…FRHDMAAKYK (147 aa). Serine 4 bears the Phosphoserine mark. Histidine 65 lines the nitrite pocket. Histidine 65 is a binding site for O2. Threonine 68 bears the Phosphothreonine mark. Histidine 94 is a binding site for heme b.

This sequence belongs to the globin family. Monomeric.

It localises to the cytoplasm. Its subcellular location is the sarcoplasm. It catalyses the reaction Fe(III)-heme b-[protein] + nitric oxide + H2O = Fe(II)-heme b-[protein] + nitrite + 2 H(+). The enzyme catalyses H2O2 + AH2 = A + 2 H2O. Functionally, monomeric heme protein which primary function is to store oxygen and facilitate its diffusion within muscle tissues. Reversibly binds oxygen through a pentacoordinated heme iron and enables its timely and efficient release as needed during periods of heightened demand. Depending on the oxidative conditions of tissues and cells, and in addition to its ability to bind oxygen, it also has a nitrite reductase activity whereby it regulates the production of bioactive nitric oxide. Under stress conditions, like hypoxia and anoxia, it also protects cells against reactive oxygen species thanks to its pseudoperoxidase activity. This is Myoglobin (MB) from Osphranter rufus (Red kangaroo).